Consider the following 375-residue polypeptide: Putative ZDHHC-type palmitoyltransferase 8 (375 aa).

A run of 2 helical transmembrane segments spans residues 4 to 24 (LFDF…TDFL) and 40 to 60 (VVGM…VSLW). An N-linked (GlcNAc...) asparagine glycan is attached at Asn95. The next 3 helical transmembrane spans lie at 105-125 (ITFY…YYYY), 221-241 (FILF…LSFF), and 285-305 (YSFI…ILLF). One can recognise a DHHC domain in the interval 176–226 (VSDGKWSTINKPKSHHCRICKRCIDSMDHHCPFAANCIGINNHHYFILFIG). Asn343 carries N-linked (GlcNAc...) asparagine glycosylation.

It belongs to the DHHC palmitoyltransferase family.

Its subcellular location is the membrane. The enzyme catalyses L-cysteinyl-[protein] + hexadecanoyl-CoA = S-hexadecanoyl-L-cysteinyl-[protein] + CoA. The polypeptide is Putative ZDHHC-type palmitoyltransferase 8 (Dictyostelium discoideum (Social amoeba)).